A 227-amino-acid chain; its full sequence is 2,3-bisphosphoglycerate-dependent phosphoglycerate mutase (227 aa).

Residues 7 to 14 (RHGFSEWN), 20 to 21 (TG), R59, 86 to 89 (ERHY), K97, 113 to 114 (RR), and 182 to 183 (GN) each bind substrate. The Tele-phosphohistidine intermediate role is filled by H8. E86 serves as the catalytic Proton donor/acceptor.

The protein belongs to the phosphoglycerate mutase family. BPG-dependent PGAM subfamily. In terms of assembly, homodimer.

The catalysed reaction is (2R)-2-phosphoglycerate = (2R)-3-phosphoglycerate. It functions in the pathway carbohydrate degradation; glycolysis; pyruvate from D-glyceraldehyde 3-phosphate: step 3/5. Functionally, catalyzes the interconversion of 2-phosphoglycerate and 3-phosphoglycerate. This is 2,3-bisphosphoglycerate-dependent phosphoglycerate mutase from Haemophilus influenzae (strain 86-028NP).